We begin with the raw amino-acid sequence, 132 residues long: MTMTDPIADFLTRLRNANSAYHDEVTLPHSKLKANIAEILKREGYISDYRTEDARVGKSLVVQLKYGPSRERSIAGLRRVSKPGLRVYAKSTNLPRVLGGLGVAIISTSSGLLTDRQAARQGVGGEVLAYVW.

The protein belongs to the universal ribosomal protein uS8 family. As to quaternary structure, part of the 30S ribosomal subunit. Contacts proteins S5 and S12.

One of the primary rRNA binding proteins, it binds directly to 16S rRNA central domain where it helps coordinate assembly of the platform of the 30S subunit. The polypeptide is Small ribosomal subunit protein uS8 (Mycolicibacterium smegmatis (strain ATCC 700084 / mc(2)155) (Mycobacterium smegmatis)).